A 492-amino-acid chain; its full sequence is Fibroblast growth factor receptor substrate 3 (492 aa).

The N-myristoyl glycine moiety is linked to residue Gly2. Residues 13 to 115 (VPDNHPTKFK…QCNSINVMEE (103 aa)) enclose the IRS-type PTB domain. 3 disordered regions span residues 153–173 (GEGPRFSAPRRLSTSSLRHPS), 338–455 (QLGG…SDSY), and 467–492 (SNLQRALPRDDGTARKTRHNSTDLPL).

Binds NTRK1. Binds FGFR1, NGFR, GRB2, PTPN11 and ERK2. Phosphorylated by ULK2 in vitro. Phosphorylated on tyrosine residues upon stimulation by BFGF or NGFB.

The protein localises to the membrane. In terms of biological role, adapter protein that links FGF and NGF receptors to downstream signaling pathways. Involved in the activation of MAP kinases. Down-regulates ERK2 signaling by interfering with the phosphorylation and nuclear translocation of ERK2. This is Fibroblast growth factor receptor substrate 3 (FRS3) from Homo sapiens (Human).